Consider the following 189-residue polypeptide: MADEQNLDTQNPEAQAAENAAPSDDLAARVQALEEQLAAAQDQSLRMAAELQNVRRRAEQDVEKAHKFALEKFANDLLPVVDSLERGLELSSPDDEAIKGVREGMQLTLKLFIDTLARHQLEAVEPHGEPFNPEHHQAMAMEESTHVEPNSVLKVFQKGYLLNGRLLRPAMVVVSKAPTTPPPSIDEQA.

The tract at residues 1–24 (MADEQNLDTQNPEAQAAENAAPSD) is disordered. The segment covering 10 to 24 (QNPEAQAAENAAPSD) has biased composition (low complexity).

It belongs to the GrpE family. As to quaternary structure, homodimer.

Its subcellular location is the cytoplasm. Functionally, participates actively in the response to hyperosmotic and heat shock by preventing the aggregation of stress-denatured proteins, in association with DnaK and GrpE. It is the nucleotide exchange factor for DnaK and may function as a thermosensor. Unfolded proteins bind initially to DnaJ; upon interaction with the DnaJ-bound protein, DnaK hydrolyzes its bound ATP, resulting in the formation of a stable complex. GrpE releases ADP from DnaK; ATP binding to DnaK triggers the release of the substrate protein, thus completing the reaction cycle. Several rounds of ATP-dependent interactions between DnaJ, DnaK and GrpE are required for fully efficient folding. In Ectopseudomonas mendocina (strain ymp) (Pseudomonas mendocina), this protein is Protein GrpE.